A 233-amino-acid chain; its full sequence is GSK-3-binding protein FRAT2 (233 aa).

Positions 1–24 (MPCRREEEEEAGEEAEGEEEEDDS) are disordered. The span at 7-24 (EEEEAGEEAEGEEEEDDS) shows a compositional bias: acidic residues. The interval 174–196 (DPHRLLQQLVLSGNLIKEAVRRL) is involved in GSK-3 binding. The interval 204 to 233 (AATGPASAPGPGGGRSGPDRIALQPSGSLL) is disordered.

Belongs to the GSK-3-binding protein family. Binds GSK-3 and prevents GSK-3-dependent phosphorylation.

Its function is as follows. Positively regulates the Wnt signaling pathway by stabilizing beta-catenin through the association with GSK-3. The polypeptide is GSK-3-binding protein FRAT2 (FRAT2) (Homo sapiens (Human)).